Reading from the N-terminus, the 542-residue chain is Gamma-terpinene synthase 1 (542 aa).

Mn(2+) is bound by residues aspartate 295 and aspartate 299. A DDXXD motif motif is present at residues 295–299; the sequence is DDVYD. 2 homodimerization regions span residues 301 to 307 and 373 to 410; these read YDTLDEL and EAKW…FTLP. 2 residues coordinate Mn(2+): aspartate 439 and glutamate 447.

Belongs to the terpene synthase family. Homodimer. It depends on Mn(2+) as a cofactor. Requires Mg(2+) as cofactor. In terms of tissue distribution, mostly expressed in flowers and, to a lower extent, in leaves, especially in glandular trichomes.

The catalysed reaction is (2E)-geranyl diphosphate = gamma-terpinene + diphosphate. The enzyme catalyses (2E)-geranyl diphosphate = alpha-terpinene + diphosphate. Its pathway is secondary metabolite biosynthesis; terpenoid biosynthesis. Its function is as follows. Involved in the biosynthesis of phenolic monoterpenes natural products thymol and carvacrol which have a broad range of biological activities acting as antimicrobial compounds, insecticides, antioxidants and pharmaceutical agents. Monoterpene synthase which catalyzes the conversion of geranyl diphosphate (GPP) to gamma-terpinene and the minor products alpha-thujene, alpha-terpinene, myrcene, sabinene, (+)-R-limonene, alpha-pinene and alpha-phellandrene. The protein is Gamma-terpinene synthase 1 of Thymus vulgaris (Thyme).